Reading from the N-terminus, the 161-residue chain is Protein-export protein SecB (161 aa).

The protein belongs to the SecB family. Homotetramer, a dimer of dimers. One homotetramer interacts with 1 SecA dimer.

It is found in the cytoplasm. Its function is as follows. One of the proteins required for the normal export of preproteins out of the cell cytoplasm. It is a molecular chaperone that binds to a subset of precursor proteins, maintaining them in a translocation-competent state. It also specifically binds to its receptor SecA. The chain is Protein-export protein SecB from Afipia carboxidovorans (strain ATCC 49405 / DSM 1227 / KCTC 32145 / OM5) (Oligotropha carboxidovorans).